Here is a 370-residue protein sequence, read N- to C-terminus: Sensor histidine kinase DesK (370 aa).

Topologically, residues 1 to 10 are extracellular; the sequence is MIKNHFTFQK. The chain crosses the membrane as a helical span at residues 11–31; sequence LNGITPYIWTIFFILPFYFIW. Over 32 to 36 the chain is Cytoplasmic; sequence KSSST. A helical membrane pass occupies residues 37–57; it reads FVIIVGIILTLLFFSVYRFAF. The Extracellular segment spans residues 58–70; that stretch reads VSKGWTIYLWGFL. Residues 71-91 traverse the membrane as a helical segment; sequence LIGISTASITLFSYIYFAFFI. Residues 92-103 are Cytoplasmic-facing; it reads AYFIGNIKERVP. The helical transmembrane segment at 104-124 threads the bilayer; the sequence is FHILYYVHLISAAVAANFSLV. The Extracellular portion of the chain corresponds to 125 to 128; the sequence is LKKE. A helical transmembrane segment spans residues 129–149; it reads FFLTQIPFVVITLISAILLPF. Topologically, residues 150 to 370 are cytoplasmic; that stretch reads SIKSRKERER…LTMAIPNNSK (221 aa). The region spanning 186–369 is the Histidine kinase domain; sequence DLHDTLGQKL…KLTMAIPNNS (184 aa). At histidine 188 the chain carries Phosphohistidine; by autocatalysis.

The protein localises to the cell membrane. The enzyme catalyses ATP + protein L-histidine = ADP + protein N-phospho-L-histidine.. Member of the two-component regulatory system DesR/DesK, responsible for cold induction of the des gene coding for the Delta5 acyl-lipid desaturase. Acts as a sensor of the membrane fluidity. Probably activates DesR by phosphorylation. The polypeptide is Sensor histidine kinase DesK (desK) (Bacillus subtilis (strain 168)).